The following is a 242-amino-acid chain: Phosphatidylethanolamine-binding protein 4 (242 aa).

Residues 1 to 26 (MTMKLVAAALCLSLLAAGLWVGLSLT) form the signal peptide. The tract at residues 31–50 (EEGKPGGEKPGGGKPGGSGR) is disordered. The span at 38–50 (EKPGGGKPGGSGR) shows a compositional bias: gly residues. N77 and N139 each carry an N-linked (GlcNAc...) asparagine glycan. The segment at 210–242 (DPDTSTQFMTQFDEELSSEFGRINDDQEQFNQK) is important for secretion.

It belongs to the phosphatidylethanolamine-binding protein family.

Its subcellular location is the secreted. In terms of biological role, promotes AKT phosphorylation, suggesting a possible role in the PI3K-AKT signaling pathway. The chain is Phosphatidylethanolamine-binding protein 4 (Pebp4) from Mus musculus (Mouse).